The sequence spans 209 residues: MAETCKMKYTVFHSPLGKIELCGCERGLHGIRFLSGKTPSSDPKEAPASPELLGGPEDLPESLVQCTTWLEAYFQEPAATEGLPLPALHHPVFQQDSFTRQVLWKLLKVVKFGEMVSYQQLAALAGNPKAARAVGGAMRNNPVPILIPCHRVICSNGSIGNYSGGGQAVKEWLLAHEGIPTRQPACKDLGLTGTRLKPSGGSTSSKLSG.

Cys-5 contributes to the Zn(2+) binding site. Ser-14 carries the phosphoserine modification. Positions 24 and 29 each coordinate Zn(2+). The segment at 35 to 57 (SGKTPSSDPKEAPASPELLGGPE) is disordered. His-89 provides a ligand contact to Zn(2+). 5 residues coordinate DNA: Thr-99, Tyr-118, Gln-119, Asn-127, and Arg-132. Cys-149 functions as the Nucleophile; methyl group acceptor in the catalytic mechanism. Ser-155 contributes to the DNA binding site. A Phosphoserine modification is found at Ser-205.

It belongs to the MGMT family. The cofactor is Zn(2+).

Its subcellular location is the nucleus. It carries out the reaction a 6-O-methyl-2'-deoxyguanosine in DNA + L-cysteinyl-[protein] = S-methyl-L-cysteinyl-[protein] + a 2'-deoxyguanosine in DNA. It catalyses the reaction a 4-O-methyl-thymidine in DNA + L-cysteinyl-[protein] = a thymidine in DNA + S-methyl-L-cysteinyl-[protein]. Its function is as follows. Involved in the cellular defense against the biological effects of O6-methylguanine (O6-MeG) and O4-methylthymine (O4-MeT) in DNA. Repairs the methylated nucleobase in DNA by stoichiometrically transferring the methyl group to a cysteine residue in the enzyme. This is a suicide reaction: the enzyme is irreversibly inactivated. This is Methylated-DNA--protein-cysteine methyltransferase (MGMT) from Cricetulus griseus (Chinese hamster).